A 368-amino-acid chain; its full sequence is Germination protease (368 aa).

The propeptide occupies M1–D16.

Belongs to the peptidase A25 family. As to quaternary structure, homotetramer. Post-translationally, autoproteolytically processed. The inactive tetrameric zymogen termed p46 autoprocesses to a smaller form termed p41, which is active only during spore germination.

The catalysed reaction is Endopeptidase action with P4 Glu or Asp, P1 preferably Glu &gt; Asp, P1' hydrophobic and P2' Ala.. Its function is as follows. Initiates the rapid degradation of small, acid-soluble proteins during spore germination. The polypeptide is Germination protease (Bacillus velezensis (strain DSM 23117 / BGSC 10A6 / LMG 26770 / FZB42) (Bacillus amyloliquefaciens subsp. plantarum)).